Here is a 217-residue protein sequence, read N- to C-terminus: Putative 3-methyladenine DNA glycosylase (217 aa).

The RPE2 insert domain occupies 105–145; that stretch reads SHNNVYTIDTAKIKSQITDEKTQSIIIRKNRRIMKFYIPNL.

It belongs to the DNA glycosylase MPG family.

The chain is Putative 3-methyladenine DNA glycosylase from Rickettsia prowazekii (strain Madrid E).